The following is a 171-amino-acid chain: Disulfide bond formation protein B (171 aa).

At 1–13 (MSALTRFAQSRLA) the chain is on the cytoplasmic side. A helical transmembrane segment spans residues 14 to 30 (WTLLLLTAVGLEACALF). Residues 31–48 (FQHVMKLDPCVMCIYQRL) are Periplasmic-facing. Cys40 and Cys43 are oxidised to a cystine. A helical transmembrane segment spans residues 49–64 (AVLGVLTAGLIGVVGH). Topologically, residues 65-71 (QFRLLRF) are cytoplasmic. Residues 72 to 89 (LGVLLWGVSAAWGLKLAL) traverse the membrane as a helical segment. Topologically, residues 90-144 (ELVEMQTNPSPFSTCSFLPEFPEWMPLHEWFPSVFLPTGMCTDIPWEMFGITMSQ) are periplasmic. The cysteines at positions 104 and 130 are disulfide-linked. Residues 145–163 (WMVVAFSTYLIALVVFIVP) form a helical membrane-spanning segment. The Cytoplasmic segment spans residues 164-171 (ALMPTKKA).

The protein belongs to the DsbB family.

It localises to the cell inner membrane. Its function is as follows. Required for disulfide bond formation in some periplasmic proteins. Acts by oxidizing the DsbA protein. This Shewanella loihica (strain ATCC BAA-1088 / PV-4) protein is Disulfide bond formation protein B.